Consider the following 301-residue polypeptide: Glycine--tRNA ligase alpha subunit (301 aa).

This sequence belongs to the class-II aminoacyl-tRNA synthetase family. In terms of assembly, tetramer of two alpha and two beta subunits.

It localises to the cytoplasm. The enzyme catalyses tRNA(Gly) + glycine + ATP = glycyl-tRNA(Gly) + AMP + diphosphate. This chain is Glycine--tRNA ligase alpha subunit, found in Campylobacter hominis (strain ATCC BAA-381 / DSM 21671 / CCUG 45161 / LMG 19568 / NCTC 13146 / CH001A).